Reading from the N-terminus, the 92-residue chain is Small ribosomal subunit protein uS19 (92 aa).

Belongs to the universal ribosomal protein uS19 family.

Functionally, protein S19 forms a complex with S13 that binds strongly to the 16S ribosomal RNA. The sequence is that of Small ribosomal subunit protein uS19 from Bifidobacterium animalis subsp. lactis (strain AD011).